The chain runs to 283 residues: Polyamine aminopropyltransferase (283 aa).

One can recognise a PABS domain in the interval 2–238 (ELWYTEEWTE…GHWLFGFASK (237 aa)). Gln-31 lines the S-methyl-5'-thioadenosine pocket. Residues His-62 and Asp-86 each contribute to the spermidine site. Residues Glu-106 and 137-138 (DG) contribute to the S-methyl-5'-thioadenosine site. The active-site Proton acceptor is Asp-156. Residue 156-159 (DSTD) coordinates spermidine. Position 163 (Pro-163) interacts with S-methyl-5'-thioadenosine.

The protein belongs to the spermidine/spermine synthase family. Homodimer or homotetramer.

Its subcellular location is the cytoplasm. It catalyses the reaction S-adenosyl 3-(methylsulfanyl)propylamine + putrescine = S-methyl-5'-thioadenosine + spermidine + H(+). Its pathway is amine and polyamine biosynthesis; spermidine biosynthesis; spermidine from putrescine: step 1/1. Catalyzes the irreversible transfer of a propylamine group from the amino donor S-adenosylmethioninamine (decarboxy-AdoMet) to putrescine (1,4-diaminobutane) to yield spermidine. The polypeptide is Polyamine aminopropyltransferase (Clostridioides difficile (strain 630) (Peptoclostridium difficile)).